Reading from the N-terminus, the 161-residue chain is Ribonuclease P protein component 2 (161 aa).

This sequence belongs to the eukaryotic/archaeal RNase P protein component 2 family. Consists of a catalytic RNA component and at least 4-5 protein subunits.

It is found in the cytoplasm. It catalyses the reaction Endonucleolytic cleavage of RNA, removing 5'-extranucleotides from tRNA precursor.. Part of ribonuclease P, a protein complex that generates mature tRNA molecules by cleaving their 5'-ends. This chain is Ribonuclease P protein component 2, found in Methanopyrus kandleri (strain AV19 / DSM 6324 / JCM 9639 / NBRC 100938).